A 277-amino-acid polypeptide reads, in one-letter code: uncharacterized protein (277 aa).

Belongs to the BtpA family.

It is found in the mitochondrion. This is an uncharacterized protein from Caenorhabditis elegans.